The primary structure comprises 98 residues: MREETVVYEQEESVSHGGGKHRILAELARVEQEVAFLEKELKEVENTDIVSTVCEELLSVIEKGPDPLLPLTNGPLNLGWDRWFEGPNGGEGCRCLIL.

Positions 19 to 98 constitute a G protein gamma domain; that stretch reads GKHRILAELA…GGEGCRCLIL (80 aa). Positions 20 to 50 form a coiled coil; it reads KHRILAELARVEQEVAFLEKELKEVENTDIV. The regulates lipidation and cell membrane subcellular localization stretch occupies residues 88–94; that stretch reads NGGEGCR. A lipid anchor (S-palmitoyl cysteine) is attached at C93. Cysteine methyl ester is present on C95. The S-farnesyl cysteine moiety is linked to residue C95. Positions 96–98 are cleaved as a propeptide — removed in mature form; that stretch reads LIL.

G proteins are composed of 3 units, alpha, beta and gamma. Interacts with the beta subunit GB1. The dimer GB1-GG1 interacts with NDL1, NDL2 and NDL3. Binds to NUDT7. As to expression, mostly expressed in seedlings (especially at the hypocotyl/root junction), young cauline leaves, open flowers, and floral stems, and, to a lower extent, in roots (restricted to the stele), rosette leaves (restricted to veins), siliques, and unopened floral buds. Also present in hydathods.

It is found in the cell membrane. The protein resides in the golgi apparatus membrane. The protein localises to the golgi apparatus. It localises to the trans-Golgi network membrane. Its subcellular location is the cytoplasm. Its function is as follows. Guanine nucleotide-binding proteins (G proteins) are involved as a modulator or transducer in various transmembrane signaling systems. The beta and gamma chains are required for the GTPase activity, for replacement of GDP by GTP, and for G protein-effector interaction. Involved in the abscisic acid (ABA) and ethylene signaling pathways. Regulates acropetal transport of auxin (IAA) in roots and hypocotyls, and thus modulates root architecture (e.g. lateral root formation). The heterotrimeric G-protein controls defense responses to necrotrophic and vascular fungi probably by modulating cell wall-related genes expression; involved in resistance to fungal pathogens such as Alternaria brassicicola, Plectosphaerella cucumerina and Fusarium oxysporum. This Arabidopsis thaliana (Mouse-ear cress) protein is Guanine nucleotide-binding protein subunit gamma 1 (GG1).